We begin with the raw amino-acid sequence, 88 residues long: Small ribosomal subunit protein bS20 (88 aa).

It belongs to the bacterial ribosomal protein bS20 family.

Its function is as follows. Binds directly to 16S ribosomal RNA. The protein is Small ribosomal subunit protein bS20 of Legionella pneumophila (strain Paris).